Reading from the N-terminus, the 415-residue chain is Lipoyl synthase, mitochondrial (415 aa).

The transit peptide at 1 to 32 directs the protein to the mitochondrion; sequence MAASTNRLRFLYSSARTVPQTGSITPISRRTY. Positions 22–32 are enriched in polar residues; that stretch reads GSITPISRRTY. Residues 22 to 53 form a disordered region; that stretch reads GSITPISRRTYATTEPSPSATGAPATARKRTN. The span at 33 to 47 shows a compositional bias: low complexity; that stretch reads ATTEPSPSATGAPAT. The [4Fe-4S] cluster site is built by Cys132, Cys137, Cys143, Cys163, Cys167, Cys170, and Ser378. The region spanning 146–367 is the Radical SAM core domain; sequence GSDKSAATAT…RQRALDMGFL (222 aa). The interval 395-415 is disordered; that stretch reads AAGTAGESVTDSKAAVDEATR.

Belongs to the radical SAM superfamily. Lipoyl synthase family. Requires [4Fe-4S] cluster as cofactor.

It is found in the mitochondrion. It catalyses the reaction [[Fe-S] cluster scaffold protein carrying a second [4Fe-4S](2+) cluster] + N(6)-octanoyl-L-lysyl-[protein] + 2 oxidized [2Fe-2S]-[ferredoxin] + 2 S-adenosyl-L-methionine + 4 H(+) = [[Fe-S] cluster scaffold protein] + N(6)-[(R)-dihydrolipoyl]-L-lysyl-[protein] + 4 Fe(3+) + 2 hydrogen sulfide + 2 5'-deoxyadenosine + 2 L-methionine + 2 reduced [2Fe-2S]-[ferredoxin]. It functions in the pathway protein modification; protein lipoylation via endogenous pathway; protein N(6)-(lipoyl)lysine from octanoyl-[acyl-carrier-protein]: step 2/2. Functionally, catalyzes the radical-mediated insertion of two sulfur atoms into the C-6 and C-8 positions of the octanoyl moiety bound to the lipoyl domains of lipoate-dependent enzymes, thereby converting the octanoylated domains into lipoylated derivatives. The chain is Lipoyl synthase, mitochondrial from Aspergillus oryzae (strain ATCC 42149 / RIB 40) (Yellow koji mold).